A 293-amino-acid polypeptide reads, in one-letter code: 16S rRNA (guanine(1405)-N(7))-methyltransferase (293 aa).

Residues Phe47, 80–82 (HAS), Arg86, Ala111, Asp134, 160–161 (DL), Leu176, and Gln185 each bind S-adenosyl-L-methionine. Positions 258 to 274 (GRPAPAEGAAEPGATRP) are enriched in low complexity. Residues 258 to 293 (GRPAPAEGAAEPGATRPVVDVPATARPDADRVDPTG) form a disordered region. Basic and acidic residues predominate over residues 284–293 (PDADRVDPTG).

Belongs to the methyltransferase superfamily. Aminoglycoside resistance family.

It catalyses the reaction guanosine(1405) in 16S rRNA + S-adenosyl-L-methionine = N(7)-methylguanosine(1405) in 16S rRNA + S-adenosyl-L-homocysteine. Specifically methylates the N(7) position of guanine 1405 in 16S rRNA. Confers resistance to aminoglycosides. The chain is 16S rRNA (guanine(1405)-N(7))-methyltransferase (fmrO) from Micromonospora olivasterospora.